A 28-amino-acid chain; its full sequence is Vasoactive intestinal peptide (28 aa).

Asparagine 28 is subject to Asparagine amide.

The protein belongs to the glucagon family.

Its subcellular location is the secreted. VIP is a neuropeptide involved in a diverse array of physiological processes through activating the PACAP subfamily of class B1 G protein-coupled receptors: VIP receptor 1 (VPR1) and VIP receptor 2 (VPR2). Abundantly expressed throughout the CNS and peripheral nervous systems where they primarily exert neuroprotective and immune modulatory roles. Also causes vasodilation, lowers arterial blood pressure, stimulates myocardial contractility, increases glycogenolysis and relaxes the smooth muscle of trachea, stomach and gall bladder. The sequence is that of Vasoactive intestinal peptide (VIP) from Canis lupus familiaris (Dog).